Here is a 298-residue protein sequence, read N- to C-terminus: Probable alpha-L-glutamate ligase 2 (298 aa).

Residues 104–287 (MQLLSRQGIG…VADAIICFME (184 aa)) form the ATP-grasp domain. Residues Lys-141, 178–179 (EY), Asp-187, and 211–213 (RSN) each bind ATP. Mg(2+)-binding residues include Asp-248, Glu-260, and Asn-262. Mn(2+) is bound by residues Asp-248, Glu-260, and Asn-262.

Belongs to the RimK family. It depends on Mg(2+) as a cofactor. Mn(2+) is required as a cofactor.

The chain is Probable alpha-L-glutamate ligase 2 from Shewanella frigidimarina (strain NCIMB 400).